Reading from the N-terminus, the 364-residue chain is MQERHTEQDYRALLIADTPIIDVRAPIEFEQGAMPAAINLPLMNNDERAAVGTCYKQQGSDAALALGHKLVAGEIRQQRMDAWRAACLQNPQGILCCARGGQRSHIVQSWLHAAGIDYPLVEGGYKALRQTTIQATIELAQKPIVLIGGCTGCGKTLLVQQQPNGVDLEGLARHRGSAFGRTLQPQLSQASFENLLAAEMLKTDARQNLRLWVLEDESRMIGSNHLPECLRERMTQAAIAVVEDPFEIRLERLNEEYFLRMHHDFTHAYGDEQGWQEYCEYLHHGLSAIKRRLGLQRYNELAARLDAALTTQLATGSTDSHLAWLVPLLKEYYDPMYRYQLEKKAEKVVFRGEWAEVAEWVKAR.

The region spanning 14-137 is the Rhodanese domain; it reads LIADTPIIDV…LRQTTIQATI (124 aa). Cys97 serves as the catalytic S-selanylcysteine intermediate.

It belongs to the SelU family. Monomer.

It catalyses the reaction 5-methylaminomethyl-2-thiouridine(34) in tRNA + selenophosphate + (2E)-geranyl diphosphate + H2O + H(+) = 5-methylaminomethyl-2-selenouridine(34) in tRNA + (2E)-thiogeraniol + phosphate + diphosphate. The enzyme catalyses 5-methylaminomethyl-2-thiouridine(34) in tRNA + (2E)-geranyl diphosphate = 5-methylaminomethyl-S-(2E)-geranyl-thiouridine(34) in tRNA + diphosphate. The catalysed reaction is 5-methylaminomethyl-S-(2E)-geranyl-thiouridine(34) in tRNA + selenophosphate + H(+) = 5-methylaminomethyl-2-(Se-phospho)selenouridine(34) in tRNA + (2E)-thiogeraniol. It carries out the reaction 5-methylaminomethyl-2-(Se-phospho)selenouridine(34) in tRNA + H2O = 5-methylaminomethyl-2-selenouridine(34) in tRNA + phosphate. Involved in the post-transcriptional modification of the uridine at the wobble position (U34) of tRNA(Lys), tRNA(Glu) and tRNA(Gln). Catalyzes the conversion of 2-thiouridine (S2U-RNA) to 2-selenouridine (Se2U-RNA). Acts in a two-step process involving geranylation of 2-thiouridine (S2U) to S-geranyl-2-thiouridine (geS2U) and subsequent selenation of the latter derivative to 2-selenouridine (Se2U) in the tRNA chain. The protein is tRNA 2-selenouridine synthase of Escherichia coli (strain 55989 / EAEC).